A 523-amino-acid polypeptide reads, in one-letter code: MSQQVIIFDTTLRDGEQALQASLSVKEKLQIALALERMGVDVMEVGFPVSSPGDFESVQTIARQVKNSRVCALARCVEKDIDVAAESLKVAEAFRIHTFIATSPMHIATKLRSTLDEVIERAIYMVKRARNYTDDVEFSCEDAGRTPIADLARVVEAAINAGATTINIPDTVGYTMPFEFAGIISGLYERVPNIGKAIISVHTHDDLGLAVGNSLAAVHAGARQVEGAMNGIGERAGNCSLEEVIMAIKVRKDILNVHTAINHQEIWRTSQLVSQICNMPIPANKAIVGSGAFAHSSGIHQDGVLKNRENYEIMTPESIGLNQIQLNLTSRSGRAAVKHRMDEMGYKESEYNLDNLYDAFLKLADKKGQVFDYDLEALAFIGKQQEEPEHFRLDYFSVQSGSNDIATAAVKLACGEEVKAEAANGNGPVDAVYQAINRITDYNVELVKYSLTAKGHGKDALGQVDIVANYNGRRFHGVGLATDIVESSAKAMVHVLNNIWRAAEVEKELQRKAQHNENNKETV.

The region spanning 5–267 (VIIFDTTLRD…HTAINHQEIW (263 aa)) is the Pyruvate carboxyltransferase domain. Aspartate 14, histidine 202, histidine 204, and asparagine 238 together coordinate Mn(2+). A regulatory domain region spans residues 392 to 523 (RLDYFSVQSG…QHNENNKETV (132 aa)).

Belongs to the alpha-IPM synthase/homocitrate synthase family. LeuA type 1 subfamily. As to quaternary structure, homodimer. It depends on Mn(2+) as a cofactor.

It is found in the cytoplasm. The catalysed reaction is 3-methyl-2-oxobutanoate + acetyl-CoA + H2O = (2S)-2-isopropylmalate + CoA + H(+). It functions in the pathway amino-acid biosynthesis; L-leucine biosynthesis; L-leucine from 3-methyl-2-oxobutanoate: step 1/4. Catalyzes the condensation of the acetyl group of acetyl-CoA with 3-methyl-2-oxobutanoate (2-ketoisovalerate) to form 3-carboxy-3-hydroxy-4-methylpentanoate (2-isopropylmalate). The polypeptide is 2-isopropylmalate synthase (Shigella flexneri serotype 5b (strain 8401)).